The primary structure comprises 428 residues: Sialidase-3 (428 aa).

The FRIP motif motif lies at 24–27 (YRIP). 2 residues coordinate substrate: R25 and R45. Residue D50 is the Proton acceptor of the active site. One copy of the BNR 1 repeat lies at 129–140 (IYSQDAGCSWSE). Substrate is bound by residues Y179 and Y181. The stretch at 203–214 (IYSDDLGVTWHH) is one BNR 2 repeat. Residues E225 and R245 each contribute to the substrate site. The BNR 3 repeat unit spans residues 254–265 (ALSTDHGEGFQR). Positions 294 to 318 (RCQDSSSKDAPTIQQSSPGSSLRLE) are disordered. Residues 301 to 313 (KDAPTIQQSSPGS) show a composition bias toward polar residues. S313 is modified (phosphoserine). R340 provides a ligand contact to substrate. Y370 acts as the Nucleophile in catalysis. The active site involves E387.

This sequence belongs to the glycosyl hydrolase 33 family. In terms of assembly, interacts with CAV1; this interaction enhances NEU3 sialidase activity within caveola. Interacts with EGFR; this interaction mediates desialylation of EGFR and enhances downstream signaling. Post-translationally, palmitoylated; may regulate intracellular trafficking and anchorage to plasma membrane and endomembranes. In terms of tissue distribution, highly expressed in skeletal muscle, testis, adrenal gland and thymus, followed by pancreas, liver, heart and thymus. Weakly expressed in kidney, placenta, brain and lung.

It is found in the cell membrane. It localises to the membrane. The protein localises to the caveola. Its subcellular location is the early endosome membrane. The protein resides in the recycling endosome membrane. It is found in the lysosome membrane. The enzyme catalyses Hydrolysis of alpha-(2-&gt;3)-, alpha-(2-&gt;6)-, alpha-(2-&gt;8)- glycosidic linkages of terminal sialic acid residues in oligosaccharides, glycoproteins, glycolipids, colominic acid and synthetic substrates.. It carries out the reaction a ganglioside GD1a + H2O = a ganglioside GM1 + N-acetylneuraminate. It catalyses the reaction a ganglioside GD1a (d18:1(4E)) + H2O = a ganglioside GM1 (d18:1(4E)) + N-acetylneuraminate. The catalysed reaction is a ganglioside GD1b + H2O = a ganglioside GM1 + N-acetylneuraminate. The enzyme catalyses a ganglioside GD1b (d18:1(4E)) + H2O = a ganglioside GM1 (d18:1(4E)) + N-acetylneuraminate. It carries out the reaction a ganglioside GD3 + H2O = a ganglioside GM3 + N-acetylneuraminate. It catalyses the reaction a ganglioside GD3 (d18:1(4E)) + H2O = a ganglioside GM3 (d18:1(4E)) + N-acetylneuraminate. The catalysed reaction is a ganglioside GM3 + H2O = a beta-D-galactosyl-(1-&gt;4)-beta-D-glucosyl-(1&lt;-&gt;1)-ceramide + N-acetylneuraminate. The enzyme catalyses a ganglioside GM1 + H2O = a ganglioside GA1 + N-acetylneuraminate. It carries out the reaction a ganglioside GM1 (d18:1(4E)) + H2O = a ganglioside GA1 (d18:1(4E)) + N-acetylneuraminate. It catalyses the reaction a ganglioside GM2 (d18:1(4E)) + H2O = a ganglioside GA2 (d18:1(4E)) + N-acetylneuraminate. The catalysed reaction is a ganglioside GM3 (d18:1(4E)) + H2O = a beta-D-Gal-(1-&gt;4)-beta-D-Glc-(1&lt;-&gt;1)-Cer(d18:1(4E)) + N-acetylneuraminate. The enzyme catalyses a ganglioside GT1b + H2O = a ganglioside GD1b + N-acetylneuraminate. Exo-alpha-sialidase that catalyzes the hydrolytic cleavage of the terminal sialic acid (N-acetylneuraminic acid, Neu5Ac) of a glycan moiety in the catabolism of glycolipids, glycoproteins and oligosacharides. Displays high catalytic efficiency for gangliosides including alpha-(2-&gt;3)-sialylated GD1a and GM3 and alpha-(2-&gt;8)-sialylated GD3. Plays a role in the regulation of transmembrane signaling through the modulation of ganglioside content of the lipid bilayer and by direct interaction with signaling receptors, such as EGFR. Desialylates EGFR and activates downstream signaling in proliferating cells. Contributes to clathrin-mediated endocytosis by regulating sorting of endocytosed receptors to early and recycling endosomes. This is Sialidase-3 (NEU3) from Homo sapiens (Human).